The following is a 773-amino-acid chain: Lon protease homolog 2, peroxisomal (773 aa).

The 190-residue stretch at 9–198 (LPVILVTSGV…MCIKWMNEKK (190 aa)) folds into the Lon N-terminal domain. 336–343 (GPPGIGKT) is an ATP binding site. The Lon proteolytic domain occupies 587–766 (PLPAGVCFGL…EDVIGAMMDK (180 aa)). Catalysis depends on residues Ser-672 and Lys-715. The short motif at 771-773 (AKL) is the Microbody targeting signal element.

Belongs to the peptidase S16 family.

Its subcellular location is the peroxisome matrix. It catalyses the reaction Hydrolysis of proteins in presence of ATP.. In terms of biological role, ATP-dependent serine protease that mediates the selective degradation of misfolded and unassembled polypeptides in the peroxisomal matrix. Necessary for type 2 peroxisome targeting signal (PTS2)-containing protein processing and facilitates peroxisome matrix protein import. This Caenorhabditis elegans protein is Lon protease homolog 2, peroxisomal.